A 293-amino-acid chain; its full sequence is Protease HtpX homolog (293 aa).

A run of 2 helical transmembrane segments spans residues 7 to 26 and 30 to 49; these read ASLL…ALLG and GMVM…WYYS. H131 contributes to the Zn(2+) binding site. E132 is an active-site residue. Position 135 (H135) interacts with Zn(2+). The next 2 helical transmembrane spans lie at 148 to 168 and 180 to 200; these read ATLA…FWFF and IGAL…QLGI. A Zn(2+)-binding site is contributed by E205.

Belongs to the peptidase M48B family. It depends on Zn(2+) as a cofactor.

The protein resides in the cell inner membrane. The polypeptide is Protease HtpX homolog (Acaryochloris marina (strain MBIC 11017)).